Reading from the N-terminus, the 710-residue chain is MVVATTIALYASPPSSVCSTPHQISCDLDLTSRSSSTSSSMASSPQKPIVGGLSSLFSSASVKSSSSSSCSYSTAVDEFSSLRYDRSDDLKDLSFSSSFGYSPAKFVNSFRRDHQSPISVLHGPVSCSCSPPMRMSRDRNLDGSFRLGASRLFNGFVRKALGSCVDYELGSDSGLVDELTFPMEVDTIKPYARDLLRRAQLRHKIFNDESVIKAFYEAEKAHRGQMRASRDPYLQHCVETAMLLANIGANSTVVVAGLLHDTVDDSFMSYDYILRNFGAGVADLVEGVSKLSQLSKLARENNTACKTVEADRLHPMFLAMADARAVLIKLADRLHNMKTLYALSPVKQQRFAKETLEIFAPLANCLGISTWKVQLENLCFKHLYPNQHNEMSTMLEDSFDEAMITSAIEKLDQALKKAGISYHVLCGRHKSLYSIYSKMLKKKLTVDEIHDIHGLRLIVDNEGDCYKALGVVHSLWSEVPGKLKDYITHPKFNGYQSLHTVVMDNGTVPLEVQIRTQEMHLQAEFGFAAHWRYKEGGCKYSSFVLQMVEWARWVVTWHCEAMSKDRSSISSSDSIKPPLQVFRLTLEDCPASYKPNSSQDGPVYVIVIENDKMSVQEFPASSTVSDLLSRAGPGSSRWSMYGIPAKEELRPRLNQIPVSDLKWKLKMGDVVELTPKIPDESLTEYREEIQRMYDRGLAFSRPGTMVGWGS.

The transit peptide at 1-63 (MVVATTIALY…SSLFSSASVK (63 aa)) directs the protein to the chloroplast. An HD domain is found at 233-337 (YLQHCVETAM…IKLADRLHNM (105 aa)).

The protein belongs to the RelA/SpoT family.

Its subcellular location is the plastid. The protein localises to the chloroplast. The catalysed reaction is GTP + ATP = guanosine 3'-diphosphate 5'-triphosphate + AMP. In terms of biological role, probable ppGpp (guanosine 3'-diphosphate 5'-diphosphate) synthetase that may be involved in a rapid plant ppGpp-mediated response to pathogens and other stresses. This chain is Probable GTP diphosphokinase RSH2, chloroplastic (RSH2), found in Arabidopsis thaliana (Mouse-ear cress).